Consider the following 376-residue polypeptide: UDP-N-acetylglucosamine 2-epimerase (376 aa).

Substrate contacts are provided by residues R10, K15, D95, E117, H213, Q271, F276, 290-292, E296, and R313; that span reads SGG.

It belongs to the UDP-N-acetylglucosamine 2-epimerase family. In terms of assembly, homodimer.

The protein resides in the cytoplasm. The enzyme catalyses UDP-N-acetyl-alpha-D-glucosamine = UDP-N-acetyl-alpha-D-mannosamine. The protein operates within bacterial outer membrane biogenesis; enterobacterial common antigen biosynthesis. Its function is as follows. Catalyzes the reversible epimerization at C-2 of UDP-N-acetylglucosamine (UDP-GlcNAc) and thereby provides bacteria with UDP-N-acetylmannosamine (UDP-ManNAc), the activated donor of ManNAc residues. The protein is UDP-N-acetylglucosamine 2-epimerase of Yersinia pestis.